The primary structure comprises 194 residues: Lectin-C (194 aa).

The signal sequence occupies residues 1–26 (MKRSNSIAVMLVLVLSSLMLLLPVEG). A propeptide spans 27 to 44 (QGHEGHGVGEILLMGKLG) (removed in mature form). 3 Chitin-binding type-1 domains span residues 45–86 (APVC…QCDY), 87–127 (NRCG…QCSY), and 128–168 (WRCG…QCDL). Intrachain disulfides connect cysteine 48-cysteine 63, cysteine 57-cysteine 69, cysteine 62-cysteine 76, cysteine 80-cysteine 84, cysteine 89-cysteine 104, cysteine 98-cysteine 110, cysteine 103-cysteine 117, cysteine 121-cysteine 125, cysteine 130-cysteine 145, cysteine 139-cysteine 151, cysteine 144-cysteine 158, and cysteine 162-cysteine 166. Positions 171–194 (LLPSPLRRIIAIRKLKANLANMLS) are cleaved as a propeptide — removed in mature form.

As to quaternary structure, homodimer. The homodimers are asymmetric; formed in a 'head-to-tail' fashion via hydrophobic interactions between aromatic residues of the carbohydrate-binding sites of each subunit.

Functionally, N-acetyl-D-glucosamine binding lectin. Almost no hemagglutinating activity towards human erythrocytes. Low mitogenic activity towards human peripheral blood lymphocytes. This Phytolacca americana (American pokeweed) protein is Lectin-C.